Here is a 562-residue protein sequence, read N- to C-terminus: Malate synthase (562 aa).

R177 functions as the Proton acceptor in the catalytic mechanism. D463 functions as the Proton donor in the catalytic mechanism. Residues 560-562 (SRL) carry the Microbody targeting signal motif.

The protein belongs to the malate synthase family.

It localises to the glyoxysome. The enzyme catalyses glyoxylate + acetyl-CoA + H2O = (S)-malate + CoA + H(+). Its pathway is carbohydrate metabolism; glyoxylate cycle; (S)-malate from isocitrate: step 2/2. In terms of biological role, does not seem to be essential for lipid utilization and gluconeogenesis in seedlings. The polypeptide is Malate synthase (Arabidopsis thaliana (Mouse-ear cress)).